We begin with the raw amino-acid sequence, 126 residues long: Holo-[acyl-carrier-protein] synthase (126 aa).

Mg(2+) is bound by residues D9 and E58.

It belongs to the P-Pant transferase superfamily. AcpS family. It depends on Mg(2+) as a cofactor.

It localises to the cytoplasm. It carries out the reaction apo-[ACP] + CoA = holo-[ACP] + adenosine 3',5'-bisphosphate + H(+). Its function is as follows. Transfers the 4'-phosphopantetheine moiety from coenzyme A to a Ser of acyl-carrier-protein. The sequence is that of Holo-[acyl-carrier-protein] synthase from Hamiltonella defensa subsp. Acyrthosiphon pisum (strain 5AT).